The primary structure comprises 179 residues: Large ribosomal subunit protein uL5c (179 aa).

Belongs to the universal ribosomal protein uL5 family. Part of the 50S ribosomal subunit; contacts the 5S rRNA.

It is found in the plastid. Its subcellular location is the chloroplast. Its function is as follows. Binds 5S rRNA, forms part of the central protuberance of the 50S subunit. In Euglena gracilis, this protein is Large ribosomal subunit protein uL5c (rpl5).